Here is a 156-residue protein sequence, read N- to C-terminus: Transcriptional repressor NrdR (156 aa).

A zinc finger spans residues 3–34; it reads CPFCGNVDTQVKDSRPAEDHVAIRRRRFCPAC. The ATP-cone domain maps to 49–139; that stretch reads LVVIKSNGKR…VYKNFQATGD (91 aa).

It belongs to the NrdR family. Requires Zn(2+) as cofactor.

Negatively regulates transcription of bacterial ribonucleotide reductase nrd genes and operons by binding to NrdR-boxes. The protein is Transcriptional repressor NrdR of Jannaschia sp. (strain CCS1).